The chain runs to 471 residues: Adenosylhomocysteinase (471 aa).

Positions 60, 135, and 196 each coordinate substrate. An NAD(+)-binding site is contributed by 197–199 (TTT). Residues Lys-226 and Asp-230 each contribute to the substrate site. Residues Asn-231, 260 to 265 (GYGDVG), Glu-283, Asn-318, 339 to 341 (IGH), and Asn-387 contribute to the NAD(+) site.

This sequence belongs to the adenosylhomocysteinase family. The cofactor is NAD(+).

The protein localises to the cytoplasm. It catalyses the reaction S-adenosyl-L-homocysteine + H2O = L-homocysteine + adenosine. It participates in amino-acid biosynthesis; L-homocysteine biosynthesis; L-homocysteine from S-adenosyl-L-homocysteine: step 1/1. May play a key role in the regulation of the intracellular concentration of adenosylhomocysteine. The protein is Adenosylhomocysteinase of Pelodictyon phaeoclathratiforme (strain DSM 5477 / BU-1).